A 112-amino-acid chain; its full sequence is MNFDMSKLMQQAQKMQEQMKKAQQERENMEVIGESGAGLVTVTMTGKYDVKSVSIDNSLMSEDKEILEDLIAAAVNSAVKKVEENSTASSNIYKMAKDAGIDLPSGINFPFK.

The segment at 1–27 (MNFDMSKLMQQAQKMQEQMKKAQQERE) is disordered. Over residues 17–27 (EQMKKAQQERE) the composition is skewed to basic and acidic residues.

This sequence belongs to the YbaB/EbfC family. In terms of assembly, homodimer.

The protein resides in the cytoplasm. Its subcellular location is the nucleoid. Binds to DNA and alters its conformation. May be involved in regulation of gene expression, nucleoid organization and DNA protection. This chain is Nucleoid-associated protein FTH_1374, found in Francisella tularensis subsp. holarctica (strain OSU18).